A 232-amino-acid polypeptide reads, in one-letter code: tRNA (guanine-N(7)-)-methyltransferase (232 aa).

Residues E38, D63, E90, and D113 each coordinate S-adenosyl-L-methionine. D113 is a catalytic residue. Substrate contacts are provided by K117 and D149.

Belongs to the class I-like SAM-binding methyltransferase superfamily. TrmB family.

The enzyme catalyses guanosine(46) in tRNA + S-adenosyl-L-methionine = N(7)-methylguanosine(46) in tRNA + S-adenosyl-L-homocysteine. Its pathway is tRNA modification; N(7)-methylguanine-tRNA biosynthesis. In terms of biological role, catalyzes the formation of N(7)-methylguanine at position 46 (m7G46) in tRNA. This is tRNA (guanine-N(7)-)-methyltransferase from Syntrophotalea carbinolica (strain DSM 2380 / NBRC 103641 / GraBd1) (Pelobacter carbinolicus).